Reading from the N-terminus, the 416-residue chain is Histidinol dehydrogenase (416 aa).

NAD(+) is bound by residues Y117, Q178, and N201. Substrate is bound by residues T224, Q246, and H249. Residues Q246 and H249 each coordinate Zn(2+). Active-site proton acceptor residues include E314 and H315. The substrate site is built by H315, D348, E402, and H407. D348 is a Zn(2+) binding site. Position 407 (H407) interacts with Zn(2+).

Belongs to the histidinol dehydrogenase family. Zn(2+) is required as a cofactor.

It carries out the reaction L-histidinol + 2 NAD(+) + H2O = L-histidine + 2 NADH + 3 H(+). It functions in the pathway amino-acid biosynthesis; L-histidine biosynthesis; L-histidine from 5-phospho-alpha-D-ribose 1-diphosphate: step 9/9. Catalyzes the sequential NAD-dependent oxidations of L-histidinol to L-histidinaldehyde and then to L-histidine. The polypeptide is Histidinol dehydrogenase (Staphylococcus aureus (strain Mu50 / ATCC 700699)).